We begin with the raw amino-acid sequence, 216 residues long: Probable nicotinate-nucleotide adenylyltransferase (216 aa).

Belongs to the NadD family.

It carries out the reaction nicotinate beta-D-ribonucleotide + ATP + H(+) = deamido-NAD(+) + diphosphate. The protein operates within cofactor biosynthesis; NAD(+) biosynthesis; deamido-NAD(+) from nicotinate D-ribonucleotide: step 1/1. In terms of biological role, catalyzes the reversible adenylation of nicotinate mononucleotide (NaMN) to nicotinic acid adenine dinucleotide (NaAD). The protein is Probable nicotinate-nucleotide adenylyltransferase of Pelobacter propionicus (strain DSM 2379 / NBRC 103807 / OttBd1).